A 175-amino-acid chain; its full sequence is Disulfide bond formation protein B (175 aa).

Topologically, residues 1–13 (MTALTRFAHSRSS) are cytoplasmic. The chain crosses the membrane as a helical span at residues 14–30 (WFLLTGTAIGLEAAALY). Topologically, residues 31–48 (FQYVMKLDPCVMCIYQRL) are periplasmic. A disulfide bond links C40 and C43. The helical transmembrane segment at 49–64 (AVFGILVAGLIGMTAP) threads the bilayer. At 65 to 71 (KYRLIRI) the chain is on the cytoplasmic side. A helical membrane pass occupies residues 72–89 (LGASCWAVSATWGLKLAL). At 90–144 (ALVNMQNNPSPFATCSFLPEFPTWMPLHEWFPAVMLPTGMCTDLPWRFMDVTMAE) the chain is on the periplasmic side. C104 and C130 are oxidised to a cystine. Residues 145-163 (WMVVVFSTFLVIWLLFIVP) traverse the membrane as a helical segment. Residues 164–175 (ILSGSTKPSLYK) lie on the Cytoplasmic side of the membrane.

The protein belongs to the DsbB family.

The protein localises to the cell inner membrane. Functionally, required for disulfide bond formation in some periplasmic proteins. Acts by oxidizing the DsbA protein. This Shewanella sp. (strain W3-18-1) protein is Disulfide bond formation protein B.